The following is a 349-amino-acid chain: Probable transporter vicT (349 aa).

Residues 25 to 153 (IAAALLHALA…TALAGVVLVL (129 aa)) form the EamA domain. A run of 9 helical transmembrane segments spans residues 49–69 (PFTVLQIRLFITVLGCTAYLW), 89–109 (AAGGVFGACGFYLSISYLSLS), 111–131 (ATVLNFIAPLGAIMLTTYWEG), 133–153 (TFAFLDLIACITALAGVVLVL), 179–199 (LKGVVSGITGVAGGIVAFSAM), 215–235 (FGVSICIVTTAFSTIMPEVVW), 244–264 (LLAIIGILGLVMEYLLTAGLG), 269–289 (RVTIMIYSQVLWALFLDWAIW), and 294–314 (NVLTVLGSMVVVASLAVPYLF).

Belongs to the TPT transporter family. SLC35D subfamily.

It localises to the membrane. Probable transporter; part of the gene cluster that mediates the biosynthesis of the secondary metabolite victorin, the molecular basis for Victoria blight of oats. This is Probable transporter vicT from Bipolaris victoriae (strain FI3) (Victoria blight of oats agent).